The chain runs to 440 residues: uncharacterized protein (440 aa).

This is an uncharacterized protein from Saccharolobus islandicus (Sulfolobus islandicus).